We begin with the raw amino-acid sequence, 438 residues long: Aspartate--tRNA(Asp) ligase (438 aa).

Residue Glu170 participates in L-aspartate binding. The interval 192-195 (QLYK) is aspartate. Arg214 is a binding site for L-aspartate. Residues 214–216 (RAE), 222–224 (RHL), and Glu361 each bind ATP. The Mg(2+) site is built by Glu361 and Ser364. L-aspartate is bound by residues Ser364 and Arg368. Residue 409–412 (GAER) coordinates ATP.

This sequence belongs to the class-II aminoacyl-tRNA synthetase family. Type 2 subfamily. In terms of assembly, homodimer. Mg(2+) is required as a cofactor.

It localises to the cytoplasm. It catalyses the reaction tRNA(Asp) + L-aspartate + ATP = L-aspartyl-tRNA(Asp) + AMP + diphosphate. In terms of biological role, catalyzes the attachment of L-aspartate to tRNA(Asp) in a two-step reaction: L-aspartate is first activated by ATP to form Asp-AMP and then transferred to the acceptor end of tRNA(Asp). The sequence is that of Aspartate--tRNA(Asp) ligase from Pyrococcus horikoshii (strain ATCC 700860 / DSM 12428 / JCM 9974 / NBRC 100139 / OT-3).